Consider the following 364-residue polypeptide: Zinc transporter 3 (364 aa).

The signal sequence occupies residues 1–23; the sequence is MGAKKHTLQVLPWLLLFAQHTAA. Residues 24-44 are Extracellular-facing; sequence SACDCANTTDGADRQGAMKLK. Asparagine 30 carries N-linked (GlcNAc...) asparagine glycosylation. Residues 45–65 traverse the membrane as a helical segment; sequence LIAIASILAAGAAGVLVPVIG. Residues 66 to 76 lie on the Cytoplasmic side of the membrane; sequence RSMAALRPDGD. The helical transmembrane segment at 77–97 threads the bilayer; sequence IFFAVKAFAAGVILATGMVHI. Residues 98–119 lie on the Extracellular side of the membrane; it reads LPAAFDALTSPCLKRGGGDRNP. Residues 120 to 140 traverse the membrane as a helical segment; the sequence is FPFAGLVSMSAAVSTMVVDSL. Topologically, residues 141–213 are cytoplasmic; that stretch reads AAGYYHRSQF…ESIRHKVVSQ (73 aa). The helical transmembrane segment at 214–234 threads the bilayer; the sequence is VLELGILVHSVIIGVSLGASV. At 235–241 the chain is on the extracellular side; that stretch reads RPSTIRP. The chain crosses the membrane as a helical span at residues 242–262; the sequence is LVGALSFHQFFEGVGLGGCIV. The Cytoplasmic portion of the chain corresponds to 263-271; sequence QANFKVRAT. The chain crosses the membrane as a helical span at residues 272–292; that stretch reads VIMAIFFSLTAPVGIVLGIAI. Residues 293–303 lie on the Extracellular side of the membrane; sequence SSSYNVHSSTA. A helical transmembrane segment spans residues 304-324; that stretch reads FVVEGVFNSASAGILIYMSLV. Residues 325–343 are Cytoplasmic-facing; it reads DLLATDFNNPKLQINTKLQ. The helical transmembrane segment at 344–364 threads the bilayer; the sequence is LMAYLALFLGAGLMSMLAIWA.

Belongs to the ZIP transporter (TC 2.A.5) family. As to expression, expressed in vascular bundles of stems.

It is found in the cell membrane. In terms of biological role, zinc transporter that may mediate zinc uptake from the rhizosphere. Seems specific to zinc ions and may not transport other divalent cations. This is Zinc transporter 3 (ZIP3) from Oryza sativa subsp. japonica (Rice).